Reading from the N-terminus, the 252-residue chain is Imidazole glycerol phosphate synthase subunit HisF (252 aa).

Active-site residues include aspartate 11 and aspartate 130.

The protein belongs to the HisA/HisF family. In terms of assembly, heterodimer of HisH and HisF.

The protein resides in the cytoplasm. It catalyses the reaction 5-[(5-phospho-1-deoxy-D-ribulos-1-ylimino)methylamino]-1-(5-phospho-beta-D-ribosyl)imidazole-4-carboxamide + L-glutamine = D-erythro-1-(imidazol-4-yl)glycerol 3-phosphate + 5-amino-1-(5-phospho-beta-D-ribosyl)imidazole-4-carboxamide + L-glutamate + H(+). It functions in the pathway amino-acid biosynthesis; L-histidine biosynthesis; L-histidine from 5-phospho-alpha-D-ribose 1-diphosphate: step 5/9. Functionally, IGPS catalyzes the conversion of PRFAR and glutamine to IGP, AICAR and glutamate. The HisF subunit catalyzes the cyclization activity that produces IGP and AICAR from PRFAR using the ammonia provided by the HisH subunit. The sequence is that of Imidazole glycerol phosphate synthase subunit HisF from Streptococcus gordonii (strain Challis / ATCC 35105 / BCRC 15272 / CH1 / DL1 / V288).